We begin with the raw amino-acid sequence, 42 residues long: uncharacterized protein (42 aa).

Positions 20 to 42 (RSGRAERGVRAHSPAWSERPTPN) are disordered.

This is an uncharacterized protein from Escherichia coli.